The primary structure comprises 510 residues: Nectin-4 (510 aa).

The first 31 residues, 1 to 31 (MPLSLGAEMWGPEAWLLLLLLLASFTGRCPA), serve as a signal peptide directing secretion. Positions 32 to 144 (GELETSDVVT…GSFQARLRLR (113 aa)) constitute an Ig-like V-type domain. Over 32–349 (GELETSDVVT…GKQVDLVSAS (318 aa)) the chain is Extracellular. Disulfide bonds link C52/C127, C171/C223, and C270/C315. 2 Ig-like C2-type domains span residues 148–237 (PPLP…QRIT) and 248–331 (ASVR…VTVD). N281 carries N-linked (GlcNAc...) asparagine glycosylation. The helical transmembrane segment at 350–370 (VVVVGVIAALLFCLLVVVVVL) threads the bilayer. Residues 371–510 (MSRYHRRKAQ…IYINGRGHLV (140 aa)) are Cytoplasmic-facing. The segment covering 399–412 (RRLHSHHTDPRSQP) has biased composition (basic and acidic residues). Disordered regions lie at residues 399 to 447 (RRLH…SYST) and 457 to 476 (QTEL…DQDE).

The protein belongs to the nectin family. As to quaternary structure, self-associates. Interacts via its Ig-like V-type domain with NECTIN1 Ig-like V-type domain. Interacts via its C-terminus with AFDN. In terms of assembly, (Microbial infection) Interacts (via N-terminus) with measles virus hemagglutinin protein. In terms of processing, the soluble form is produced by proteolytic cleavage at the cell surface (shedding), probably by ADAM17/TACE. In terms of tissue distribution, predominantly expressed in placenta. Not detected in normal breast epithelium but expressed in breast carcinoma.

The protein resides in the cell membrane. It is found in the cell junction. The protein localises to the adherens junction. Its subcellular location is the secreted. Its function is as follows. Seems to be involved in cell adhesion through trans-homophilic and -heterophilic interactions, the latter including specifically interactions with NECTIN1. Does not act as receptor for alpha-herpesvirus entry into cells. (Microbial infection) Acts as a receptor for measles virus. The protein is Nectin-4 of Homo sapiens (Human).